We begin with the raw amino-acid sequence, 416 residues long: Putative gustatory receptor 57a (416 aa).

Topologically, residues 1–13 are cytoplasmic; it reads MAVLYFFREPETV. A helical transmembrane segment spans residues 14 to 34; the sequence is FDCAAFICILQFLMGCNGFGI. Residues 35–48 lie on the Extracellular side of the membrane; that stretch reads RRSTFRISWASRIY. The helical transmembrane segment at 49–69 threads the bilayer; the sequence is SMSVAIAAFCCLFGSLSVLLA. Residues 70 to 83 lie on the Cytoplasmic side of the membrane; the sequence is EEDIRERLAKADNL. Residues 84 to 104 form a helical membrane-spanning segment; the sequence is VLSISALELLMSTLVFGVTVI. Over 105–143 the chain is Extracellular; the sequence is SLQVFARRHLGIYQRLAALDARLMSDFGANLNYRKMLRK. The chain crosses the membrane as a helical span at residues 144-164; it reads NIAVLGIVTTIYLMAINSAAV. The Cytoplasmic segment spans residues 165–171; it reads QVASGHR. A helical membrane pass occupies residues 172 to 192; it reads ALFLLFALCYTIVTGGPHFTG. Over 193–295 the chain is Extracellular; the sequence is YVHMTLAEML…NEEENGSCYR (103 aa). The N-linked (GlcNAc...) asparagine glycan is linked to N290. The helical transmembrane segment at 296 to 316 threads the bilayer; it reads MLGYLALVMIPPLYKLLIAPF. Topologically, residues 317–374 are cytoplasmic; sequence YCDRTIYEARRCLRLVEKLDDWFPQKSSLRPLVESLMSWRIQAKIQFTSGLDVVLSRK. The helical transmembrane segment at 375 to 395 threads the bilayer; sequence VIGLFTSILVNYLLILIQFAM. At 396-416 the chain is on the extracellular side; it reads TQKMGEQIEQQKIALQEWIGF.

It belongs to the insect chemoreceptor superfamily. Gustatory receptor (GR) family. Gr57a subfamily. In larvae, is expressed in neurons of the terminal external chemosensory organ as well as in the dorsal pharyngeal sense organ.

It is found in the cell membrane. Functionally, probable gustatory receptor which mediates acceptance or avoidance behavior, depending on its substrates. This is Putative gustatory receptor 57a (Gr57a) from Drosophila melanogaster (Fruit fly).